The following is an 87-amino-acid chain: U14-lycotoxin-Ls1b (87 aa).

Positions 1–20 (MNSKVFAVLLLLALSTCVLS) are cleaved as a signal peptide. A WAP domain is found at 21-66 (EKYCPTPRNTSCKKMNIRNNCCRDSDCTSNAFCCAEPCGNFCHKAS). Cystine bridges form between C24/C54, C32/C58, C41/C53, C42/C80, and C47/C62.

Belongs to the venom protein 11 family. 01 (wap-1) subfamily. Contains 5 disulfide bonds. In terms of tissue distribution, expressed by the venom gland.

The protein localises to the secreted. Its function is as follows. Has antibacterial activity. In Lycosa singoriensis (Wolf spider), this protein is U14-lycotoxin-Ls1b.